We begin with the raw amino-acid sequence, 277 residues long: Hemin import ATP-binding protein HmuV (277 aa).

One can recognise an ABC transporter domain in the interval 19 to 259 (VEVADLNYSV…AIIEEAFGHR (241 aa)). 51–58 (GRNGAGKS) is an ATP binding site.

This sequence belongs to the ABC transporter superfamily. Heme (hemin) importer (TC 3.A.1.14.5) family. As to quaternary structure, the complex is composed of two ATP-binding proteins (HmuV), two transmembrane proteins (HmuU) and a solute-binding protein (HmuT).

It localises to the cell membrane. Part of the ABC transporter complex HmuTUV involved in hemin import. Responsible for energy coupling to the transport system. The chain is Hemin import ATP-binding protein HmuV from Deinococcus geothermalis (strain DSM 11300 / CIP 105573 / AG-3a).